The primary structure comprises 400 residues: Probable succinyl-diaminopimelate desuccinylase (400 aa).

His72 contributes to the Zn(2+) binding site. Asp74 is a catalytic residue. Asp105 serves as a coordination point for Zn(2+). Glu139 acts as the Proton acceptor in catalysis. Glu140, Glu165, and His378 together coordinate Zn(2+).

The protein belongs to the peptidase M20A family. It depends on Zn(2+) as a cofactor. Requires Co(2+) as cofactor.

The catalysed reaction is N-succinyl-(2S,6S)-2,6-diaminopimelate + H2O = (2S,6S)-2,6-diaminopimelate + succinate. It functions in the pathway amino-acid biosynthesis; L-lysine biosynthesis via DAP pathway; LL-2,6-diaminopimelate from (S)-tetrahydrodipicolinate (succinylase route): step 3/3. This is Probable succinyl-diaminopimelate desuccinylase (dapE) from Staphylococcus aureus (strain Mu50 / ATCC 700699).